The following is a 191-amino-acid chain: Prostaglandin-H2 D-isomerase (191 aa).

Positions 1-24 are cleaved as a signal peptide; the sequence is MAALHTLWMGLVLLGVLGVLQTQA. Q25 is modified (pyrrolidone carboxylic acid). N51 carries an N-linked (GlcNAc...) asparagine glycan. Residue C65 is the Nucleophile of the active site. N78 is a glycosylation site (N-linked (GlcNAc...) asparagine). Cysteines 89 and 186 form a disulfide.

Belongs to the calycin superfamily. Lipocalin family. Monomer.

The protein resides in the rough endoplasmic reticulum. It localises to the nucleus membrane. Its subcellular location is the golgi apparatus. The protein localises to the cytoplasm. It is found in the perinuclear region. The protein resides in the secreted. It catalyses the reaction prostaglandin H2 = prostaglandin D2. Its function is as follows. Catalyzes the conversion of PGH2 to PGD2, a prostaglandin involved in smooth muscle contraction/relaxation and a potent inhibitor of platelet aggregation. Involved in a variety of CNS functions, such as sedation, NREM sleep and PGE2-induced allodynia, and may have an anti-apoptotic role in oligodendrocytes. Binds small non-substrate lipophilic molecules, including biliverdin, bilirubin, retinal, retinoic acid and thyroid hormone, and may act as a scavenger for harmful hydrophobic molecules and as a secretory retinoid and thyroid hormone transporter. Possibly involved in development and maintenance of the blood-brain, blood-retina, blood-aqueous humor and blood-testis barrier. It is likely to play important roles in both maturation and maintenance of the central nervous system and male reproductive system. Involved in PLA2G3-dependent maturation of mast cells. PLA2G3 is secreted by immature mast cells and acts on nearby fibroblasts upstream to PTDGS to synthesize PGD2, which in turn promotes mast cell maturation and degranulation via PTGDR. The protein is Prostaglandin-H2 D-isomerase (PTGDS) of Ursus arctos (Brown bear).